The sequence spans 229 residues: Thiamine-phosphate synthase (229 aa).

4-amino-2-methyl-5-(diphosphooxymethyl)pyrimidine-binding positions include 38–42 (QFREK) and N73. Positions 74 and 93 each coordinate Mg(2+). S111 is a 4-amino-2-methyl-5-(diphosphooxymethyl)pyrimidine binding site. 137–139 (TLS) lines the 2-[(2R,5Z)-2-carboxy-4-methylthiazol-5(2H)-ylidene]ethyl phosphate pocket. Residue K140 coordinates 4-amino-2-methyl-5-(diphosphooxymethyl)pyrimidine. 2-[(2R,5Z)-2-carboxy-4-methylthiazol-5(2H)-ylidene]ethyl phosphate is bound by residues G169 and 189-190 (IS).

Belongs to the thiamine-phosphate synthase family. Mg(2+) serves as cofactor.

It catalyses the reaction 2-[(2R,5Z)-2-carboxy-4-methylthiazol-5(2H)-ylidene]ethyl phosphate + 4-amino-2-methyl-5-(diphosphooxymethyl)pyrimidine + 2 H(+) = thiamine phosphate + CO2 + diphosphate. The enzyme catalyses 2-(2-carboxy-4-methylthiazol-5-yl)ethyl phosphate + 4-amino-2-methyl-5-(diphosphooxymethyl)pyrimidine + 2 H(+) = thiamine phosphate + CO2 + diphosphate. It carries out the reaction 4-methyl-5-(2-phosphooxyethyl)-thiazole + 4-amino-2-methyl-5-(diphosphooxymethyl)pyrimidine + H(+) = thiamine phosphate + diphosphate. It functions in the pathway cofactor biosynthesis; thiamine diphosphate biosynthesis; thiamine phosphate from 4-amino-2-methyl-5-diphosphomethylpyrimidine and 4-methyl-5-(2-phosphoethyl)-thiazole: step 1/1. Its function is as follows. Condenses 4-methyl-5-(beta-hydroxyethyl)thiazole monophosphate (THZ-P) and 2-methyl-4-amino-5-hydroxymethyl pyrimidine pyrophosphate (HMP-PP) to form thiamine monophosphate (TMP). The chain is Thiamine-phosphate synthase from Streptococcus suis (strain 98HAH33).